The following is a 164-amino-acid chain: V-type proton ATPase 16 kDa proteolipid subunit (164 aa).

Over 1 to 9 (MASFSGDET) the chain is Lumenal. Residues 10-32 (APFFGFLGAAAALVFSCMGAAYG) traverse the membrane as a helical segment. Residues 33-54 (TAKSGVGVASMGVMRPELVMKS) are Cytoplasmic-facing. A helical transmembrane segment spans residues 55–75 (IVPVVMAGVLGIYGLIIAVII). Over 76-94 (STGINPKAKSYYLFDGYAH) the chain is Lumenal. Residues 95–116 (LSSGLACGLAGLSAGMAIGIVG) traverse the membrane as a helical segment. The Cytoplasmic segment spans residues 117-128 (DAGVRANAQQPK). A helical membrane pass occupies residues 129-154 (LFVGMILILIFAEALALYGLIVGIIL). The Lumenal portion of the chain corresponds to 155-164 (SSRAGQSRAD).

The protein belongs to the V-ATPase proteolipid subunit family. In terms of assembly, V-ATPase is a heteromultimeric enzyme composed of a peripheral catalytic V1 complex (main components: subunits A, B, C, D, E, and F) attached to an integral membrane V0 proton pore complex (main component: the proteolipid protein; which is present as a hexamer that forms the proton-conducting pore).

Its subcellular location is the vacuole membrane. Proton-conducting pore forming subunit of the membrane integral V0 complex of vacuolar ATPase. V-ATPase is responsible for acidifying a variety of intracellular compartments in eukaryotic cells. The chain is V-type proton ATPase 16 kDa proteolipid subunit from Vigna radiata var. radiata (Mung bean).